The primary structure comprises 170 residues: Adenine phosphoribosyltransferase (170 aa).

This sequence belongs to the purine/pyrimidine phosphoribosyltransferase family. In terms of assembly, homodimer.

It localises to the cytoplasm. The catalysed reaction is AMP + diphosphate = 5-phospho-alpha-D-ribose 1-diphosphate + adenine. The protein operates within purine metabolism; AMP biosynthesis via salvage pathway; AMP from adenine: step 1/1. Functionally, catalyzes a salvage reaction resulting in the formation of AMP, that is energically less costly than de novo synthesis. The sequence is that of Adenine phosphoribosyltransferase from Fusobacterium nucleatum subsp. nucleatum (strain ATCC 25586 / DSM 15643 / BCRC 10681 / CIP 101130 / JCM 8532 / KCTC 2640 / LMG 13131 / VPI 4355).